A 149-amino-acid polypeptide reads, in one-letter code: Arginine repressor (149 aa).

This sequence belongs to the ArgR family.

Its subcellular location is the cytoplasm. Its pathway is amino-acid biosynthesis; L-arginine biosynthesis [regulation]. In terms of biological role, regulates arginine biosynthesis genes. This Exiguobacterium sibiricum (strain DSM 17290 / CCUG 55495 / CIP 109462 / JCM 13490 / 255-15) protein is Arginine repressor.